A 190-amino-acid chain; its full sequence is E3 ubiquitin-protein ligase RNF4 (190 aa).

The tract at residues 1 to 16 (MSTRKRRGGAINSRQA) is required for ubiquitination activity. The segment at 1–29 (MSTRKRRGGAINSRQAQKRTREATSTPEI) is disordered. The tract at residues 4–61 (RKRRGGAINSRQAQKRTREATSTPEISLEAEPIELVETAGDEIVDLTCESLEPVVVDL) is mediates interaction with TRPS1. Short sequence motifs (SUMO interaction motif) lie at residues 36–39 (IELV), 46–49 (IVDL), 57–59 (VVV), and 67–70 (VVIV). Serine 94 and serine 95 each carry phosphoserine. Zn(2+)-binding residues include cysteine 132, cysteine 135, cysteine 154, histidine 156, cysteine 159, cysteine 162, cysteine 173, and cysteine 176. Residues 132–177 (CPICMDGYSEIVQNGRLIVSTECGHVFCSQCLRDSLKNANTCPTCR) form an RING-type zinc finger.

In terms of assembly, homodimer (via RING-type zinc finger domain). Interacts with GSC2. Interacts with AR/the androgen receptor and TBP. Interacts with TCF20. Interacts with PATZ1. Interacts with TRPS1; negatively regulates TRPS1 transcriptional repressor activity. Interacts with PML (isoform PML-1, isoform PML-2, isoform PML-3, isoform PML-4, isoform PML-5 and isoform PML-6). Interacts with PRDM1/Blimp-1. In terms of processing, sumoylated; conjugated by one or two SUMO1 moieties. Post-translationally, autoubiquitinated. Widely expressed at low levels in many tissues; highly expressed in testis.

Its subcellular location is the cytoplasm. It is found in the nucleus. The protein resides in the PML body. It catalyses the reaction S-ubiquitinyl-[E2 ubiquitin-conjugating enzyme]-L-cysteine + [acceptor protein]-L-lysine = [E2 ubiquitin-conjugating enzyme]-L-cysteine + N(6)-ubiquitinyl-[acceptor protein]-L-lysine.. Its pathway is protein modification; protein ubiquitination. Functionally, E3 ubiquitin-protein ligase which binds polysumoylated chains covalently attached to proteins and mediates 'Lys-6'-, 'Lys-11'-, 'Lys-48'- and 'Lys-63'-linked polyubiquitination of those substrates and their subsequent targeting to the proteasome for degradation. Regulates the degradation of several proteins including PML and the transcriptional activator PEA3. Involved in chromosome alignment and spindle assembly, it regulates the kinetochore CENPH-CENPI-CENPK complex by targeting polysumoylated CENPI to proteasomal degradation. Regulates the cellular responses to hypoxia and heat shock through degradation of respectively EPAS1 and PARP1. Alternatively, it may also bind DNA/nucleosomes and have a more direct role in the regulation of transcription for instance enhancing basal transcription and steroid receptor-mediated transcriptional activation. Catalyzes ubiquitination of sumoylated PARP1 in response to PARP1 trapping to chromatin, leading to PARP1 removal from chromatin by VCP/p97. This Homo sapiens (Human) protein is E3 ubiquitin-protein ligase RNF4.